A 350-amino-acid chain; its full sequence is Probable dual-specificity RNA methyltransferase RlmN (350 aa).

Residues 105 to 342 (ANGKNSVCIS…VRQSKGANIN (238 aa)) enclose the Radical SAM core domain. Cys-112 and Cys-345 form a disulfide bridge. [4Fe-4S] cluster contacts are provided by Cys-119, Cys-123, and Cys-126. Residues 166 to 167 (GE), Ser-198, 221 to 223 (SLH), and Asn-302 contribute to the S-adenosyl-L-methionine site. The active-site S-methylcysteine intermediate is Cys-345.

This sequence belongs to the radical SAM superfamily. RlmN family. Requires [4Fe-4S] cluster as cofactor.

It is found in the cytoplasm. It catalyses the reaction adenosine(2503) in 23S rRNA + 2 reduced [2Fe-2S]-[ferredoxin] + 2 S-adenosyl-L-methionine = 2-methyladenosine(2503) in 23S rRNA + 5'-deoxyadenosine + L-methionine + 2 oxidized [2Fe-2S]-[ferredoxin] + S-adenosyl-L-homocysteine. The catalysed reaction is adenosine(37) in tRNA + 2 reduced [2Fe-2S]-[ferredoxin] + 2 S-adenosyl-L-methionine = 2-methyladenosine(37) in tRNA + 5'-deoxyadenosine + L-methionine + 2 oxidized [2Fe-2S]-[ferredoxin] + S-adenosyl-L-homocysteine. Specifically methylates position 2 of adenine 2503 in 23S rRNA and position 2 of adenine 37 in tRNAs. The polypeptide is Probable dual-specificity RNA methyltransferase RlmN (Endomicrobium trichonymphae).